The sequence spans 438 residues: Rhomboid-related protein 1 (438 aa).

A disordered region spans residues M1–S62. The span at G8–D17 shows a compositional bias: acidic residues. Transmembrane regions (helical) follow at residues P196–A216, G262–L282, I284–M304, V308–M328, L340–L359, P372–L392, and W405–F425. S312 (nucleophile) is an active-site residue. The active site involves H377.

This sequence belongs to the peptidase S54 family. Detected in heart, brain, skeletal muscle and kidney.

The protein localises to the membrane. The enzyme catalyses Cleaves type-1 transmembrane domains using a catalytic dyad composed of serine and histidine that are contributed by different transmembrane domains.. In terms of biological role, may be involved in regulated intramembrane proteolysis and the subsequent release of functional polypeptides from their membrane anchors. This is Rhomboid-related protein 1 (RHBDL1) from Homo sapiens (Human).